We begin with the raw amino-acid sequence, 417 residues long: MFRRLLIATIIGILAALAVAGFRHAMLVLEWLFLRNDTGSLVNAATNLSPWRRLITPAVGGLAAGALLWGWQKMNQQRPHAPTDYMEALQTDGQFDYGASLVKSLASLLVVASGSAIGREGAMILLAALAASCFAQRCTPREEWKLWIACGAAAGMASAYHAPLAGSLFIAEILFGTLMLASLGPVVISAVVALLTTHLLSGGNALLYTVHLSLDLHVREYAMIISTGLVAGVCGPLFMWLMTTTHNGFIRLKLSPPWQLALGGFIVGLLSLLTPAVWGNGYSVVQSFLLSPPLLSVIAGIFICKLLAVLASSGSGAPGGVFTPTLFIGLSIGMLYGRMWGFWLPGADEMAILLGLTGMATLLAATTHAPMMSTLMICEMTGEYRLLPGLLIACVVASVLSRTLREDSVYRQHTAEH.

11 consecutive transmembrane segments (helical) span residues 5–25 (LLIA…FRHA), 54–74 (LITP…WQKM), 146–166 (LWIA…PLAG), 168–188 (LFIA…PVVI), 190–210 (AVVA…LYTV), 222–242 (AMII…MWLM), 258–278 (WQLA…PAVW), 288–308 (FLLS…KLLA), 316–336 (GAPG…GMLY), 339–359 (MWGF…LTGM), and 380–400 (MTGE…ASVL).

Belongs to the chloride channel (TC 2.A.49) family. ClcB subfamily.

The protein resides in the cell inner membrane. Its function is as follows. Probably acts as an electrical shunt for an outwardly-directed proton pump that is linked to amino acid decarboxylation, as part of the extreme acid resistance (XAR) response. This Citrobacter koseri (strain ATCC BAA-895 / CDC 4225-83 / SGSC4696) protein is Voltage-gated ClC-type chloride channel ClcB.